A 375-amino-acid chain; its full sequence is Chaperone protein DnaJ (375 aa).

The region spanning 5 to 70 is the J domain; it reads DYYEVLGVSR…QKRAAYDQFG (66 aa). A CR-type zinc finger spans residues 131-209; that stretch reads GTTVKIRVPS…CHGSGYVEEQ (79 aa). Residues Cys-144, Cys-147, Cys-161, Cys-164, Cys-183, Cys-186, Cys-197, and Cys-200 each coordinate Zn(2+). CXXCXGXG motif repeat units lie at residues 144–151, 161–168, 183–190, and 197–204; these read CKSCSGSG, CGTCNGAG, CPRCRGAG, and CRSCHGSG.

The protein belongs to the DnaJ family. In terms of assembly, homodimer. Zn(2+) is required as a cofactor.

It localises to the cytoplasm. Its function is as follows. Participates actively in the response to hyperosmotic and heat shock by preventing the aggregation of stress-denatured proteins and by disaggregating proteins, also in an autonomous, DnaK-independent fashion. Unfolded proteins bind initially to DnaJ; upon interaction with the DnaJ-bound protein, DnaK hydrolyzes its bound ATP, resulting in the formation of a stable complex. GrpE releases ADP from DnaK; ATP binding to DnaK triggers the release of the substrate protein, thus completing the reaction cycle. Several rounds of ATP-dependent interactions between DnaJ, DnaK and GrpE are required for fully efficient folding. Also involved, together with DnaK and GrpE, in the DNA replication of plasmids through activation of initiation proteins. In Hahella chejuensis (strain KCTC 2396), this protein is Chaperone protein DnaJ.